We begin with the raw amino-acid sequence, 167 residues long: Large ribosomal subunit protein bL9 (167 aa).

Belongs to the bacterial ribosomal protein bL9 family.

Functionally, binds to the 23S rRNA. This chain is Large ribosomal subunit protein bL9, found in Nitratidesulfovibrio vulgaris (strain DSM 19637 / Miyazaki F) (Desulfovibrio vulgaris).